A 359-amino-acid chain; its full sequence is NADH-quinone oxidoreductase subunit H (359 aa).

The next 8 membrane-spanning stretches (helical) occupy residues 19–39, 94–114, 127–147, 166–186, 202–222, 266–286, 301–321, and 337–357; these read IGWFPLGLVIIAAIPLVFIAL, FLFVIGPGILFVGSFLAFAVL, VGLFYAVGIVAIEVVGILAAG, IVSYEIPASIALLCAAMLAGT, FMHWFLFTNPIAWLPFLIYFI, MFMVSAIISIAFLGGWTSPLP, VWGAFWIIMKGFFFIFVQMWL, and CWKVLTPFSLIAFVLTAIWVI.

The protein belongs to the complex I subunit 1 family. As to quaternary structure, NDH-1 is composed of 14 different subunits. Subunits NuoA, H, J, K, L, M, N constitute the membrane sector of the complex.

Its subcellular location is the cell inner membrane. It catalyses the reaction a quinone + NADH + 5 H(+)(in) = a quinol + NAD(+) + 4 H(+)(out). In terms of biological role, NDH-1 shuttles electrons from NADH, via FMN and iron-sulfur (Fe-S) centers, to quinones in the respiratory chain. The immediate electron acceptor for the enzyme in this species is believed to be ubiquinone. Couples the redox reaction to proton translocation (for every two electrons transferred, four hydrogen ions are translocated across the cytoplasmic membrane), and thus conserves the redox energy in a proton gradient. This subunit may bind ubiquinone. This is NADH-quinone oxidoreductase subunit H from Chlorobaculum parvum (strain DSM 263 / NCIMB 8327) (Chlorobium vibrioforme subsp. thiosulfatophilum).